We begin with the raw amino-acid sequence, 309 residues long: Non-homologous end-joining factor 1 (309 aa).

Positions 1–134 (MEAVLSALPW…TPVAVVCRQL (134 aa)) are globular head. Residues 223–298 (GKTGRKRKHS…AGSEDRSTSR (76 aa)) are C-terminal tail. The segment at 223–309 (GKTGRKRKHS…KKKKAVGLFR (87 aa)) is disordered. Basic and acidic residues predominate over residues 243–252 (HITDHQHISE). 2 stretches are compositionally biased toward polar residues: residues 253-265 (STDVGPSLASQEH) and 273-290 (RSQVANSQQTLPLSSTAG). The span at 297–309 (SRAKKKKAVGLFR) shows a compositional bias: basic residues. The XLM motif lies at 299–309 (AKKKKAVGLFR).

This sequence belongs to the XRCC4-XLF family. XLF subfamily. In terms of assembly, homodimer. Interacts with xrcc4; the interaction is direct and is mediated via a head-to-head interaction between N-terminal head regions. Component of the core long-range non-homologous end joining (NHEJ) complex (also named DNA-PK complex) composed of prkdc/DNA-PKcs, lig4, xrcc4, xrcc6/Ku70, xrcc5/Ku80 and nhej1/xlf.

The protein localises to the nucleus. It localises to the chromosome. DNA repair protein involved in DNA non-homologous end joining (NHEJ); it is required for double-strand break (DSB) repair and V(D)J recombination and is also involved in telomere maintenance. Plays a key role in NHEJ by promoting the ligation of various mismatched and non-cohesive ends. In some studies, has been shown to associate with xrcc4 to form alternating helical filaments that bridge DNA and act like a bandage, holding together the broken DNA until it is repaired. Alternatively, it has also been shown that rather than forming filaments, a single nhej1 dimer interacts through both head domains with xrcc4 to promote the close alignment of DNA ends. The xrcc4-nhej1/xlf subcomplex binds to the DNA fragments of a DSB in a highly diffusive manner and robustly bridges two independent DNA molecules, holding the broken DNA fragments in close proximity to one other. The mobility of the bridges ensures that the ends remain accessible for further processing by other repair factors. In Danio rerio (Zebrafish), this protein is Non-homologous end-joining factor 1 (nhej1).